Reading from the N-terminus, the 423-residue chain is Serine hydroxymethyltransferase (423 aa).

(6S)-5,6,7,8-tetrahydrofolate contacts are provided by residues L118 and 122 to 124; that span reads GHL. N6-(pyridoxal phosphate)lysine is present on K227. A (6S)-5,6,7,8-tetrahydrofolate-binding site is contributed by 351-353; sequence SPF.

It belongs to the SHMT family. In terms of assembly, homodimer. Pyridoxal 5'-phosphate is required as a cofactor.

Its subcellular location is the cytoplasm. The catalysed reaction is (6R)-5,10-methylene-5,6,7,8-tetrahydrofolate + glycine + H2O = (6S)-5,6,7,8-tetrahydrofolate + L-serine. Its pathway is one-carbon metabolism; tetrahydrofolate interconversion. The protein operates within amino-acid biosynthesis; glycine biosynthesis; glycine from L-serine: step 1/1. Functionally, catalyzes the reversible interconversion of serine and glycine with tetrahydrofolate (THF) serving as the one-carbon carrier. This reaction serves as the major source of one-carbon groups required for the biosynthesis of purines, thymidylate, methionine, and other important biomolecules. Also exhibits THF-independent aldolase activity toward beta-hydroxyamino acids, producing glycine and aldehydes, via a retro-aldol mechanism. The polypeptide is Serine hydroxymethyltransferase (Petrotoga mobilis (strain DSM 10674 / SJ95)).